A 373-amino-acid chain; its full sequence is NAD(P)H-quinone oxidoreductase subunit 1 (373 aa).

Transmembrane regions (helical) follow at residues 28-48 (LLWLPLPMLLVLVAAVVGVLV), 98-118 (LLFTLGPVLVVIPVIISWLII), 129-149 (VGVGIFLWIAFSSIQPIGLLM), 167-187 (AAQSISYEIPLALAVLAIVMM), 205-225 (ILSWNIWRQPVGFLIFWICAL), 267-287 (VLSAVLVSVLYLGGWGFPIPV), 309-329 (SVGIVMTVLKAYLLVFVAILL), and 348-368 (FLLPLSLVNLLVTAALKLAFP).

This sequence belongs to the complex I subunit 1 family. NDH-1 is composed of at least 11 different subunits.

It is found in the cellular thylakoid membrane. It catalyses the reaction a plastoquinone + NADH + (n+1) H(+)(in) = a plastoquinol + NAD(+) + n H(+)(out). The enzyme catalyses a plastoquinone + NADPH + (n+1) H(+)(in) = a plastoquinol + NADP(+) + n H(+)(out). In terms of biological role, NDH-1 shuttles electrons from an unknown electron donor, via FMN and iron-sulfur (Fe-S) centers, to quinones in the respiratory and/or the photosynthetic chain. The immediate electron acceptor for the enzyme in this species is believed to be plastoquinone. Couples the redox reaction to proton translocation, and thus conserves the redox energy in a proton gradient. This chain is NAD(P)H-quinone oxidoreductase subunit 1, found in Parasynechococcus marenigrum (strain WH8102).